A 404-amino-acid polypeptide reads, in one-letter code: Cysteine desulfurase IscS (404 aa).

Pyridoxal 5'-phosphate contacts are provided by residues Ala-75–Thr-76, Asn-155, Gln-183, and Ser-203–His-205. Lys-206 carries the N6-(pyridoxal phosphate)lysine modification. Thr-243 contacts pyridoxal 5'-phosphate. Cys-328 functions as the Cysteine persulfide intermediate in the catalytic mechanism. Cys-328 contacts [2Fe-2S] cluster.

It belongs to the class-V pyridoxal-phosphate-dependent aminotransferase family. NifS/IscS subfamily. In terms of assembly, homodimer. Forms a heterotetramer with IscU, interacts with other sulfur acceptors. Requires pyridoxal 5'-phosphate as cofactor.

Its subcellular location is the cytoplasm. It carries out the reaction (sulfur carrier)-H + L-cysteine = (sulfur carrier)-SH + L-alanine. It participates in cofactor biosynthesis; iron-sulfur cluster biosynthesis. Master enzyme that delivers sulfur to a number of partners involved in Fe-S cluster assembly, tRNA modification or cofactor biosynthesis. Catalyzes the removal of elemental sulfur atoms from cysteine to produce alanine. Functions as a sulfur delivery protein for Fe-S cluster synthesis onto IscU, an Fe-S scaffold assembly protein, as well as other S acceptor proteins. The chain is Cysteine desulfurase IscS from Pseudomonas aeruginosa (strain UCBPP-PA14).